The sequence spans 209 residues: Large ribosomal subunit protein uL3 (209 aa).

Belongs to the universal ribosomal protein uL3 family. Part of the 50S ribosomal subunit. Forms a cluster with proteins L14 and L19.

In terms of biological role, one of the primary rRNA binding proteins, it binds directly near the 3'-end of the 23S rRNA, where it nucleates assembly of the 50S subunit. This Nitratidesulfovibrio vulgaris (strain DSM 19637 / Miyazaki F) (Desulfovibrio vulgaris) protein is Large ribosomal subunit protein uL3.